A 297-amino-acid chain; its full sequence is Dehydrodolichyl diphosphate synthase complex subunit Nus1 (297 aa).

2 helical membrane passes run 7 to 26 (LVWRVLHALLCLHLTLTSWL) and 40 to 56 (CCRAASAAVLAPLGFTL). Residues 63–73 (GRNRRHHRHPH) are compositionally biased toward basic residues. Residues 63–86 (GRNRRHHRHPHGGPGPGPGPAATH) are disordered. A helical transmembrane segment spans residues 121-139 (IASLVVWCMAVGISYISVY). Residues Asn148 and Asn275 are each glycosylated (N-linked (GlcNAc...) asparagine). The short motif at 294–296 (RLG) is the RXG motif; crucial for prenyltransferase activity element. Isopentenyl diphosphate-binding residues include Leu295 and Gly296.

This sequence belongs to the UPP synthase family. As to quaternary structure, the active dehydrodolichyl diphosphate synthase complex is a heterotetramer composed of a dimer of heterodimer of DHDDS and NUS1. Interacts with NPC2. The cofactor is Mg(2+). In terms of tissue distribution, highly expressed in heart, liver, kidney and pancreas.

The protein resides in the endoplasmic reticulum membrane. The catalysed reaction is n isopentenyl diphosphate + (2E,6E)-farnesyl diphosphate = a di-trans,poly-cis-polyprenyl diphosphate + n diphosphate. It participates in protein modification; protein glycosylation. Its pathway is lipid metabolism. Functionally, with DHDDS, forms the dehydrodolichyl diphosphate synthase (DDS) complex, an essential component of the dolichol monophosphate (Dol-P) biosynthetic machinery. Both subunits contribute to enzymatic activity, i.e. condensation of multiple copies of isopentenyl pyrophosphate (IPP) to farnesyl pyrophosphate (FPP) to produce dehydrodolichyl diphosphate (Dedol-PP), a precursor of dolichol phosphate which is utilized as a sugar carrier in protein glycosylation in the endoplasmic reticulum (ER). Synthesizes long-chain polyprenols, mostly of C95 and C100 chain length. Regulates the glycosylation and stability of nascent NPC2, thereby promoting trafficking of LDL-derived cholesterol. Acts as a specific receptor for the N-terminus of Nogo-B, a neural and cardiovascular regulator. This is Dehydrodolichyl diphosphate synthase complex subunit Nus1 from Mus musculus (Mouse).